An 820-amino-acid chain; its full sequence is Serine/threonine-protein phosphatase 4 regulatory subunit 3B (820 aa).

Positions 1 to 100 (MSDTRRRVKV…DEIWEKICQV (100 aa)) constitute a WH1 domain. Ser-117 and Ser-663 each carry phosphoserine. Positions 687–820 (EDDDEEGKAV…SPRKRPRLGS (134 aa)) are disordered. Basic and acidic residues predominate over residues 701–732 (EKSKTEDDFPDSYEKFMETKKAKESEDKENLP). Residues 744–789 (FSHSPSATNGTNSTNSKSVVSQTTPASSNVASSKTTSLATSVTATK) are compositionally biased toward polar residues. Positions 798–809 (YPDDEEEDEEEE) are enriched in acidic residues. Ser-811 is modified (phosphoserine).

It belongs to the SMEK family. In terms of assembly, serine/threonine-protein phosphatase 4 (PP4) occurs in different assemblies of the catalytic and one or more regulatory subunits. Component of the PP4 complex PPP4C-PPP4R2-PPP4R3B.

The protein resides in the cytoplasm. It localises to the cytoskeleton. The protein localises to the microtubule organizing center. Its subcellular location is the centrosome. It is found in the nucleus. Regulatory subunit of serine/threonine-protein phosphatase 4 (PP4). May regulate the activity of PPP4C at centrosomal microtubule organizing centers. In Mus musculus (Mouse), this protein is Serine/threonine-protein phosphatase 4 regulatory subunit 3B.